Here is a 309-residue protein sequence, read N- to C-terminus: Homoserine O-succinyltransferase (309 aa).

The active-site Acyl-thioester intermediate is the cysteine 142. Substrate is bound by residues lysine 163 and serine 192. Residue histidine 235 is the Proton acceptor of the active site. Glutamate 237 is an active-site residue. Residue arginine 249 participates in substrate binding.

This sequence belongs to the MetA family. In terms of assembly, homodimer.

The protein resides in the cytoplasm. It carries out the reaction L-homoserine + succinyl-CoA = O-succinyl-L-homoserine + CoA. It participates in amino-acid biosynthesis; L-methionine biosynthesis via de novo pathway; O-succinyl-L-homoserine from L-homoserine: step 1/1. In terms of biological role, transfers a succinyl group from succinyl-CoA to L-homoserine, forming succinyl-L-homoserine. This Escherichia coli (strain ATCC 8739 / DSM 1576 / NBRC 3972 / NCIMB 8545 / WDCM 00012 / Crooks) protein is Homoserine O-succinyltransferase.